A 229-amino-acid chain; its full sequence is Uracil-DNA glycosylase (229 aa).

Asp-65 acts as the Proton acceptor in catalysis.

Belongs to the uracil-DNA glycosylase (UDG) superfamily. UNG family.

It is found in the cytoplasm. It carries out the reaction Hydrolyzes single-stranded DNA or mismatched double-stranded DNA and polynucleotides, releasing free uracil.. Its function is as follows. Excises uracil residues from the DNA which can arise as a result of misincorporation of dUMP residues by DNA polymerase or due to deamination of cytosine. The polypeptide is Uracil-DNA glycosylase (Limosilactobacillus reuteri (strain DSM 20016) (Lactobacillus reuteri)).